The chain runs to 417 residues: Cysteate synthase (417 aa).

Lysine 102 carries the post-translational modification N6-(pyridoxal phosphate)lysine. The pyridoxal 5'-phosphate site is built by asparagine 128 and threonine 380.

It belongs to the threonine synthase family. Cysteate synthase subfamily. Homotrimer. The cofactor is pyridoxal 5'-phosphate.

The enzyme catalyses O-phospho-L-serine + sulfite + H(+) = L-cysteate + phosphate. The protein operates within cofactor biosynthesis; coenzyme M biosynthesis. Its function is as follows. Specifically catalyzes the beta-elimination of phosphate from L-phosphoserine and the beta-addition of sulfite to the dehydroalanine intermediate to produce L-cysteate. In Methanocella arvoryzae (strain DSM 22066 / NBRC 105507 / MRE50), this protein is Cysteate synthase.